The sequence spans 805 residues: Leucine--tRNA ligase (805 aa).

Positions 40–51 (PYPSGAGLHVGH) match the 'HIGH' region motif. Residues 576–580 (KMSKS) carry the 'KMSKS' region motif. Lys579 contributes to the ATP binding site.

Belongs to the class-I aminoacyl-tRNA synthetase family.

The protein resides in the cytoplasm. It catalyses the reaction tRNA(Leu) + L-leucine + ATP = L-leucyl-tRNA(Leu) + AMP + diphosphate. The chain is Leucine--tRNA ligase from Anoxybacillus flavithermus (strain DSM 21510 / WK1).